A 149-amino-acid polypeptide reads, in one-letter code: Hydroalkoxylation enzyme phnH (149 aa).

The first 18 residues, 1–18, serve as a signal peptide directing secretion; that stretch reads MKFTYLVSLAAFAVTALG. N-linked (GlcNAc...) asparagine glycosylation is found at Asn-33 and Asn-127.

As to quaternary structure, homotetramer.

It catalyses the reaction 2,4,7,9-tetrahydroxy-6-methyl-8-(2-methylbut-3-en-2-yl)-1-oxo-1H-phenalen-3-ol = (2'R)-atrovenetin. Its pathway is secondary metabolite biosynthesis. Hydroalkoxylation enzyme; part of the gene cluster that mediates the biosynthesis of phenalenones such as herqueinone, compounds that have been reported to treat tumors, bacterial infections and/or mycoses, and rheumatic diseases. The non-reducing polyketide synthase phnA synthesizes the heptaketide backbone and cyclizes it into the angular, hemiketal-containing naphtho-gamma-pyrone prephenalenone. The product template (PT) domain of phnA catalyzes only the C4-C9 aldol condensation, which is unprecedented among known PT domains. The transformation of prephenalenone to phenalenones requires an FAD-dependent monooxygenase phnB, which catalyzes the C2 aromatic hydroxylation of prephenalenone and ring opening of the gamma-pyrone ring simultaneously. Subsequent intramolecular deprotonation of C3 phenolic oxygen accelerates phenalenone ring closure to yield the tricyclic phenalenone core with a C2 hydroxylation. The prenyltransferase phnF further catalyzes reverse C-prenylation of phenalenone by direct electrophilic substitution at C6, or possibly via first a forward O-prenylation of a neighboring phenol in phenalenone, followed by a Claisen rearrangement. The hydroalkoxylation enzyme phnH catalyzes the 5-exo-trig cyclization via acid catalysis after the spontaneous deprotonation of 7-OH, which leads to the formation of the dihydrobenzofuran atrovenetin. Atrovenetin is further converted to deoxyherqueinone by the O-methyltransferase phnC which can methylate C2-OH to stabilize the northern portion of the phenalenone core. Finally, the oxidoreductase phnG converts deoxyherqueinone to herqueinone via C6 hydroxylation. The chain is Hydroalkoxylation enzyme phnH from Penicillium herquei.